The sequence spans 193 residues: Probable molybdenum cofactor guanylyltransferase (193 aa).

GTP contacts are provided by residues 9-11, Lys-21, Asp-64, and Asp-93; that span reads TAG. Asp-93 is a Mg(2+) binding site.

This sequence belongs to the MobA family. Mg(2+) is required as a cofactor.

It localises to the cytoplasm. It carries out the reaction Mo-molybdopterin + GTP + H(+) = Mo-molybdopterin guanine dinucleotide + diphosphate. Transfers a GMP moiety from GTP to Mo-molybdopterin (Mo-MPT) cofactor (Moco or molybdenum cofactor) to form Mo-molybdopterin guanine dinucleotide (Mo-MGD) cofactor. The chain is Probable molybdenum cofactor guanylyltransferase from Deinococcus radiodurans (strain ATCC 13939 / DSM 20539 / JCM 16871 / CCUG 27074 / LMG 4051 / NBRC 15346 / NCIMB 9279 / VKM B-1422 / R1).